A 417-amino-acid chain; its full sequence is Putative nickel insertion protein (417 aa).

A disordered region spans residues 69-99; the sequence is HEHHHDHGHHHHGHGHHHDHTHDHHHHHEHR. Over residues 74 to 99 the composition is skewed to basic residues; sequence DHGHHHHGHGHHHDHTHDHHHHHEHR.

It belongs to the LarC family.

The protein is Putative nickel insertion protein of Maridesulfovibrio salexigens (strain ATCC 14822 / DSM 2638 / NCIMB 8403 / VKM B-1763) (Desulfovibrio salexigens).